The chain runs to 418 residues: Putative F-box protein At3g23950 (418 aa).

An F-box domain is found at 1–42; sequence MNIPPELTFEVLVRLPLKSLARFRSMCKEWKLVIDSEFFRDC.

The chain is Putative F-box protein At3g23950 from Arabidopsis thaliana (Mouse-ear cress).